The following is a 211-amino-acid chain: uncharacterized protein (211 aa).

Low complexity-rich tracts occupy residues 1–19 (MQDP…SSSD) and 61–74 (SPSV…SSNA). Disordered regions lie at residues 1 to 27 (MQDP…STGS) and 54 to 94 (ASSR…EPHR).

As to quaternary structure, interacts with RLK902. In terms of tissue distribution, expressed in inflorescences, stems, rosette leaves and weakly in roots.

This is an uncharacterized protein from Arabidopsis thaliana (Mouse-ear cress).